The following is a 389-amino-acid chain: D-alanyl-D-alanine carboxypeptidase DacF (389 aa).

Positions 1-23 are cleaved as a signal peptide; sequence MKRLLSTLLIGIMLLTFAPSAFA. Residue Ser64 is the Acyl-ester intermediate of the active site. Lys67 (proton acceptor) is an active-site residue. The active site involves Ser124. Lys230 is a substrate binding site.

The protein belongs to the peptidase S11 family.

It is found in the secreted. The catalysed reaction is Preferential cleavage: (Ac)2-L-Lys-D-Ala-|-D-Ala. Also transpeptidation of peptidyl-alanyl moieties that are N-acyl substituents of D-alanine.. The protein operates within cell wall biogenesis; peptidoglycan biosynthesis. Removes C-terminal D-alanyl residues from sugar-peptide cell wall precursors. This Bacillus subtilis (strain 168) protein is D-alanyl-D-alanine carboxypeptidase DacF (dacF).